Reading from the N-terminus, the 545-residue chain is MIRPLPPELRGLLARGEVLLTVKDAVRELLENALDAGARRVRVELWGGGLKRLVVEDDGEGIPLEDLPLAVEPYATSKLQDLEGIRTLGFRGQALYALRQAARLRIRSRPRGQLGGGLLLAEGERVEVRPVPAPPGTRVEVEGLFLGEGRDPKGEVRGVLELLKRYLLHHPRLALALFAEGEARLLFPGAGLEEAARLAFGRLLAKRLLPLAYGAGGLEVQGLVSRPEVSRTRPDRLFLAVNGRPVAFPEGLLRRVRRAYRELLPEGHYPVGVLNLFLPQEAFRLRLDARKEEVVLSEEVEALVEEALLALFRRENLARALPEPKPLQPLSPPTASGLPRLRFLAQFRESYLLAEAGDTLYVVDQHAAHERILYEDLLKRVAEGPKPLPRPLLVPLAPEEEALLEAGQEALAALFRWEPFGPGRVRLLMAPAFLHPYPLLLPEVFKEALRGEGRSLKALLARLACLPAVKAGHPLGEAQGQALLDALLACETPWACPHGRPVLLALKEEDLIRRFGRRSGARGGGEARPRPQEESFPEAPLPREP.

Residues Arg517–Pro545 are disordered.

The protein belongs to the DNA mismatch repair MutL/HexB family.

This protein is involved in the repair of mismatches in DNA. It is required for dam-dependent methyl-directed DNA mismatch repair. May act as a 'molecular matchmaker', a protein that promotes the formation of a stable complex between two or more DNA-binding proteins in an ATP-dependent manner without itself being part of a final effector complex. In Thermus thermophilus (strain ATCC 27634 / DSM 579 / HB8), this protein is DNA mismatch repair protein MutL.